Consider the following 194-residue polypeptide: Pyridoxal 5'-phosphate synthase subunit PdxT (194 aa).

54–56 is a binding site for L-glutamine; sequence GES. Cysteine 83 serves as the catalytic Nucleophile. L-glutamine-binding positions include arginine 110 and 139–140; that span reads IR. Catalysis depends on charge relay system residues histidine 175 and glutamate 177.

Belongs to the glutaminase PdxT/SNO family. In the presence of PdxS, forms a dodecamer of heterodimers. Only shows activity in the heterodimer.

It catalyses the reaction aldehydo-D-ribose 5-phosphate + D-glyceraldehyde 3-phosphate + L-glutamine = pyridoxal 5'-phosphate + L-glutamate + phosphate + 3 H2O + H(+). The catalysed reaction is L-glutamine + H2O = L-glutamate + NH4(+). It functions in the pathway cofactor biosynthesis; pyridoxal 5'-phosphate biosynthesis. In terms of biological role, catalyzes the hydrolysis of glutamine to glutamate and ammonia as part of the biosynthesis of pyridoxal 5'-phosphate. The resulting ammonia molecule is channeled to the active site of PdxS. This Methanoregula boonei (strain DSM 21154 / JCM 14090 / 6A8) protein is Pyridoxal 5'-phosphate synthase subunit PdxT.